The chain runs to 351 residues: Probable cell division control protein 7 homolog 2 (351 aa).

The Protein kinase domain maps to 21 to 341 (YTPIEKIGEG…ASDALSHPFF (321 aa)). ATP contacts are provided by residues 27-35 (IGEGSFSVV) and lysine 50. Aspartate 137 acts as the Proton acceptor in catalysis.

The protein belongs to the protein kinase superfamily. Ser/Thr protein kinase family. CDC7 subfamily. Requires Mg(2+) as cofactor.

It catalyses the reaction L-seryl-[protein] + ATP = O-phospho-L-seryl-[protein] + ADP + H(+). The catalysed reaction is L-threonyl-[protein] + ATP = O-phospho-L-threonyl-[protein] + ADP + H(+). In terms of biological role, serine/threonine-protein kinase. Needed for the initiation of DNA synthesis during mitosis as well as for synaptonemal complex formation and commitment to recombination during meiosis. This is Probable cell division control protein 7 homolog 2 (CDC7-2) from Encephalitozoon cuniculi (strain GB-M1) (Microsporidian parasite).